The following is a 290-amino-acid chain: Putative beta-lactamase HcpC (290 aa).

The signal sequence occupies residues 1-25 (MLENVKKSLFRVLCLGALCLGGLMA). TPR repeat units follow at residues 29–62 (PKELVGLGAKSYKEQDFTQAKKYFEKACDLKENS), 64–98 (CFNLGVLYYQGHGVEKNLKKAASFYSKACDLNYSN), 100–133 (CHLLGNLYYSGQGVSQNTNKALQYYSKACDLKYA), 134–170 (EGCASLGGIYHDGKVVTRDFKKAVEYFTKACDLNDGD), 172–205 (CTILGSLYDAGRGTPKDLKKALASYDKACDLKDS), 206–242 (PGCFNAGNMYHHGEGAAKNFKEALARYSKACELENGG), and 244–278 (CFNLGAMQYNGEGATRNEKQAIENFKKGCKLGAKG). Intrachain disulfides connect Cys56–Cys64, Cys92–Cys100, Cys128–Cys136, Cys164–Cys172, Cys200–Cys208, Cys236–Cys244, and Cys272–Cys280.

It belongs to the hcp beta-lactamase family.

Its subcellular location is the secreted. It catalyses the reaction a beta-lactam + H2O = a substituted beta-amino acid. May hydrolyze 6-aminopenicillinic acid and 7-aminocephalosporanic acid (ACA) derivatives. The polypeptide is Putative beta-lactamase HcpC (hcpC) (Helicobacter pylori (strain J99 / ATCC 700824) (Campylobacter pylori J99)).